The sequence spans 229 residues: uncharacterized protein (229 aa).

Residues 66–94 (GHEKLQIQSALRDIESAENQARVQQCNAK) adopt a coiled-coil conformation.

This is an uncharacterized protein from Ostreid herpesvirus 1 (isolate France) (OsHV-1).